The primary structure comprises 206 residues: Probable glutathione S-transferase 6 (206 aa).

Positions 2 to 79 constitute a GST N-terminal domain; that stretch reads VHYKLVYFPL…YLAREFGIAG (78 aa). Residues tyrosine 8, tryptophan 39, lysine 43, 49–51, and 63–64 contribute to the glutathione site; these read GQL and QS. In terms of domain architecture, GST C-terminal spans 81-206; the sequence is NDTEAAEVDA…YIANRPDYPF (126 aa).

It belongs to the GST superfamily. Sigma family.

It catalyses the reaction RX + glutathione = an S-substituted glutathione + a halide anion + H(+). In terms of biological role, conjugation of reduced glutathione to a wide number of exogenous and endogenous hydrophobic electrophiles. The sequence is that of Probable glutathione S-transferase 6 (gst-6) from Caenorhabditis elegans.